A 191-amino-acid chain; its full sequence is Xanthine phosphoribosyltransferase (191 aa).

Xanthine-binding residues include Leu-20 and Asn-27. Position 128 to 132 (128 to 132) interacts with 5-phospho-alpha-D-ribose 1-diphosphate; the sequence is ANGQA. Lys-156 contacts xanthine.

The protein belongs to the purine/pyrimidine phosphoribosyltransferase family. Xpt subfamily. In terms of assembly, homodimer.

It localises to the cytoplasm. The enzyme catalyses XMP + diphosphate = xanthine + 5-phospho-alpha-D-ribose 1-diphosphate. It functions in the pathway purine metabolism; XMP biosynthesis via salvage pathway; XMP from xanthine: step 1/1. In terms of biological role, converts the preformed base xanthine, a product of nucleic acid breakdown, to xanthosine 5'-monophosphate (XMP), so it can be reused for RNA or DNA synthesis. The protein is Xanthine phosphoribosyltransferase of Limosilactobacillus reuteri (strain DSM 20016) (Lactobacillus reuteri).